A 527-amino-acid chain; its full sequence is Probable malate:quinone oxidoreductase 2 (527 aa).

The protein belongs to the MQO family. FAD serves as cofactor.

It catalyses the reaction (S)-malate + a quinone = a quinol + oxaloacetate. Its pathway is carbohydrate metabolism; tricarboxylic acid cycle; oxaloacetate from (S)-malate (quinone route): step 1/1. This Pseudomonas putida (strain ATCC 47054 / DSM 6125 / CFBP 8728 / NCIMB 11950 / KT2440) protein is Probable malate:quinone oxidoreductase 2.